A 304-amino-acid polypeptide reads, in one-letter code: UDP-3-O-acyl-N-acetylglucosamine deacetylase (304 aa).

Zn(2+) contacts are provided by H78, H237, and D241. The active-site Proton donor is H264.

Belongs to the LpxC family. Zn(2+) is required as a cofactor.

The catalysed reaction is a UDP-3-O-[(3R)-3-hydroxyacyl]-N-acetyl-alpha-D-glucosamine + H2O = a UDP-3-O-[(3R)-3-hydroxyacyl]-alpha-D-glucosamine + acetate. It functions in the pathway glycolipid biosynthesis; lipid IV(A) biosynthesis; lipid IV(A) from (3R)-3-hydroxytetradecanoyl-[acyl-carrier-protein] and UDP-N-acetyl-alpha-D-glucosamine: step 2/6. Catalyzes the hydrolysis of UDP-3-O-myristoyl-N-acetylglucosamine to form UDP-3-O-myristoylglucosamine and acetate, the committed step in lipid A biosynthesis. The polypeptide is UDP-3-O-acyl-N-acetylglucosamine deacetylase (Marinobacter nauticus (strain ATCC 700491 / DSM 11845 / VT8) (Marinobacter aquaeolei)).